The primary structure comprises 458 residues: uncharacterized protein (458 aa).

The segment covering Met1–Ala10 has biased composition (basic and acidic residues). Positions Met1–Ser20 are disordered. Residues Val23–Glu84 enclose the TRAM domain. Residues Cys97, Cys105, Cys108, and Cys193 each contribute to the [4Fe-4S] cluster site. Gln287, Tyr316, Glu340, and Asp384 together coordinate S-adenosyl-L-methionine. Cys411 acts as the Nucleophile in catalysis.

Belongs to the class I-like SAM-binding methyltransferase superfamily. RNA M5U methyltransferase family.

This is an uncharacterized protein from Streptomyces coelicolor (strain ATCC BAA-471 / A3(2) / M145).